A 256-amino-acid polypeptide reads, in one-letter code: Post-translational flagellin modification protein A (256 aa).

Residue Ser145 coordinates substrate. Tyr168 (proton acceptor) is an active-site residue.

Belongs to the short-chain dehydrogenases/reductases (SDR) family.

Required for biosynthesis of LAH modification in the post-translational modification of Campylobacter coli flagellin. The protein is Post-translational flagellin modification protein A (ptmA) of Campylobacter coli.